Here is a 156-residue protein sequence, read N- to C-terminus: LIM domain only protein 3 (156 aa).

2 LIM zinc-binding domains span residues 22–84 and 86–148; these read KGCA…LFGV and GNCA…GLMK.

The sequence is that of LIM domain only protein 3 from Xenopus laevis (African clawed frog).